The chain runs to 552 residues: Chaperonin GroEL (552 aa).

Residues 30–33, K51, 87–91, G415, and D499 each bind ATP; these read TLGP and DGTTT.

Belongs to the chaperonin (HSP60) family. In terms of assembly, forms a cylinder of 14 subunits composed of two heptameric rings stacked back-to-back. Interacts with the co-chaperonin GroES.

The protein resides in the cytoplasm. The catalysed reaction is ATP + H2O + a folded polypeptide = ADP + phosphate + an unfolded polypeptide.. Together with its co-chaperonin GroES, plays an essential role in assisting protein folding. The GroEL-GroES system forms a nano-cage that allows encapsulation of the non-native substrate proteins and provides a physical environment optimized to promote and accelerate protein folding. This is Chaperonin GroEL from Hamiltonella defensa subsp. Acyrthosiphon pisum (strain 5AT).